The primary structure comprises 232 residues: Ribose-5-phosphate isomerase A (232 aa).

Substrate is bound by residues 31 to 34 (TGST), 87 to 90 (DGAD), and 100 to 103 (KGGG). Catalysis depends on Glu109, which acts as the Proton acceptor. Lys127 lines the substrate pocket.

It belongs to the ribose 5-phosphate isomerase family. Homodimer.

It carries out the reaction aldehydo-D-ribose 5-phosphate = D-ribulose 5-phosphate. The protein operates within carbohydrate degradation; pentose phosphate pathway; D-ribose 5-phosphate from D-ribulose 5-phosphate (non-oxidative stage): step 1/1. Its function is as follows. Catalyzes the reversible conversion of ribose-5-phosphate to ribulose 5-phosphate. This is Ribose-5-phosphate isomerase A from Bifidobacterium longum (strain NCC 2705).